The following is a 367-amino-acid chain: Alginate lyase (367 aa).

The signal sequence occupies residues 1–24; that stretch reads MTIINRKTAPALLALALFGGAAQA. Residues 63–64, 136–137, and Y254 contribute to the substrate site; these read SK and HT.

It belongs to the polysaccharide lyase 5 family.

It is found in the periplasm. It catalyses the reaction Eliminative cleavage of alginate to give oligosaccharides with 4-deoxy-alpha-L-erythro-hex-4-enuronosyl groups at their non-reducing ends and beta-D-mannuronate at their reducing end.. Functionally, catalyzes the depolymerization of alginate by cleaving the beta-1,4 glycosidic bond between two adjacent sugar residues via a beta-elimination mechanism. May serve to degrade mislocalized alginate that is trapped in the periplasmic space. The polypeptide is Alginate lyase (Pseudomonas entomophila (strain L48)).